Reading from the N-terminus, the 292-residue chain is 4-hydroxy-tetrahydrodipicolinate synthase (292 aa).

Thr45 is a binding site for pyruvate. Residue Tyr133 is the Proton donor/acceptor of the active site. Catalysis depends on Lys162, which acts as the Schiff-base intermediate with substrate. Residue Ile204 coordinates pyruvate.

The protein belongs to the DapA family. Homotetramer; dimer of dimers.

The protein resides in the cytoplasm. It carries out the reaction L-aspartate 4-semialdehyde + pyruvate = (2S,4S)-4-hydroxy-2,3,4,5-tetrahydrodipicolinate + H2O + H(+). It functions in the pathway amino-acid biosynthesis; L-lysine biosynthesis via DAP pathway; (S)-tetrahydrodipicolinate from L-aspartate: step 3/4. Functionally, catalyzes the condensation of (S)-aspartate-beta-semialdehyde [(S)-ASA] and pyruvate to 4-hydroxy-tetrahydrodipicolinate (HTPA). This chain is 4-hydroxy-tetrahydrodipicolinate synthase, found in Nitratidesulfovibrio vulgaris (strain ATCC 29579 / DSM 644 / CCUG 34227 / NCIMB 8303 / VKM B-1760 / Hildenborough) (Desulfovibrio vulgaris).